The following is a 112-amino-acid chain: Transmembrane protein 14 homolog (112 aa).

The chain crosses the membrane as a helical span at residues valine 3–alanine 23.

This sequence belongs to the TMEM14 family.

The protein resides in the membrane. The polypeptide is Transmembrane protein 14 homolog (Drosophila melanogaster (Fruit fly)).